Consider the following 466-residue polypeptide: Soluble pyridine nucleotide transhydrogenase (466 aa).

36–45 (ERYQNVGGGC) is an FAD binding site.

The protein belongs to the class-I pyridine nucleotide-disulfide oxidoreductase family. The cofactor is FAD.

Its subcellular location is the cytoplasm. The catalysed reaction is NAD(+) + NADPH = NADH + NADP(+). In terms of biological role, conversion of NADPH, generated by peripheral catabolic pathways, to NADH, which can enter the respiratory chain for energy generation. In Escherichia coli O6:K15:H31 (strain 536 / UPEC), this protein is Soluble pyridine nucleotide transhydrogenase.